The chain runs to 479 residues: tRNA-dihydrouridine(20) synthase [NAD(P)+] (479 aa).

FMN is bound by residues 14–16 (PMV) and glutamine 87. Cysteine 116 (proton donor) is an active-site residue. FMN contacts are provided by residues lysine 159, histidine 187, 221–223 (NGD), and 245–246 (AR).

This sequence belongs to the Dus family. Dus2 subfamily. The cofactor is FMN.

The protein localises to the cytoplasm. It localises to the nucleus. The enzyme catalyses 5,6-dihydrouridine(20) in tRNA + NADP(+) = uridine(20) in tRNA + NADPH + H(+). The catalysed reaction is 5,6-dihydrouridine(20) in tRNA + NAD(+) = uridine(20) in tRNA + NADH + H(+). It carries out the reaction a 5,6-dihydrouridine in mRNA + NAD(+) = a uridine in mRNA + NADH + H(+). It catalyses the reaction a 5,6-dihydrouridine in mRNA + NADP(+) = a uridine in mRNA + NADPH + H(+). Functionally, catalyzes the NADPH-dependent synthesis of dihydrouridine, a modified base found in the D-loop of most tRNAs. Specifically modifies U20 in cytoplasmic tRNAs. Also able to mediate dihydrouridylation of some mRNAs, thereby affecting their translation. The sequence is that of tRNA-dihydrouridine(20) synthase [NAD(P)+] from Schizosaccharomyces pombe (strain 972 / ATCC 24843) (Fission yeast).